We begin with the raw amino-acid sequence, 59 residues long: Three-finger toxin MS1 (59 aa).

4 disulfides stabilise this stretch: C3/C22, C17/C39, C41/C52, and C53/C58.

This sequence belongs to the three-finger toxin family. Short-chain subfamily. Type I alpha-neurotoxin sub-subfamily. In terms of tissue distribution, expressed by the venom gland.

The protein resides in the secreted. Functionally, produces peripheral paralysis by blocking neuromuscular transmission at the postsynaptic site. Binds to and inhibits the endogenous nicotinic acetylcholine receptors (nAChR) in human rhabdomyosarcoma TE 671 cell line with an IC(50) of 48.2 mM. This neurotoxin is lethal to mice by intraperitoneal injection and to zebrafish by injection at the back of the dorsolateral region. The chain is Three-finger toxin MS1 from Micrurus surinamensis (Surinam coral snake).